Here is a 478-residue protein sequence, read N- to C-terminus: Lysine-rich nucleolar protein 1 (478 aa).

The disordered stretch occupies residues 1-231 (MVSKTQKADL…THQEGDILLV (231 aa)). Residue Lys-7 forms a Glycyl lysine isopeptide (Lys-Gly) (interchain with G-Cter in SUMO2) linkage. Residues 17–27 (KKKKKKKKKRV) show a composition bias toward basic residues. A compositionally biased stretch (polar residues) spans 33–45 (EPETQYSVLNSND). Ser-51 and Ser-59 each carry phosphoserine. The segment covering 54–63 (RATSPSNNVD) has biased composition (polar residues). Composition is skewed to basic residues over residues 73 to 82 (SKRKKKKKSC) and 120 to 129 (EKKKKRRKSL). Residue Lys-140 forms a Glycyl lysine isopeptide (Lys-Gly) (interchain with G-Cter in SUMO2) linkage. Ser-142 bears the Phosphoserine mark. The span at 143-153 (PDPKHAKEVSK) shows a compositional bias: basic and acidic residues. Composition is skewed to basic residues over residues 154–165 (AGRKSKKQRKEK) and 204–222 (QKRK…KKKT). A Glycyl lysine isopeptide (Lys-Gly) (interchain with G-Cter in SUMO1); alternate cross-link involves residue Lys-250. A Glycyl lysine isopeptide (Lys-Gly) (interchain with G-Cter in SUMO2); alternate cross-link involves residue Lys-250. The segment at 258 to 314 (PIDSPKAPGKKKVKSKKKVEQPVGEGLAVKRKKKKKKRKENGVKEDPWQEEKEESDT) is disordered. The residue at position 261 (Ser-261) is a Phosphoserine. Over residues 265-274 (PGKKKVKSKK) the composition is skewed to basic residues. Glycyl lysine isopeptide (Lys-Gly) (interchain with G-Cter in SUMO2) cross-links involve residues Lys-275 and Lys-287. Basic residues predominate over residues 286–296 (VKRKKKKKKRK). Residues 297 to 307 (ENGVKEDPWQE) are compositionally biased toward basic and acidic residues. Lys-309 participates in a covalent cross-link: Glycyl lysine isopeptide (Lys-Gly) (interchain with G-Cter in SUMO2). Residues 310-478 (EESDTDLEVV…NASKSIKLQD (169 aa)) are interaction with ZNF106. Residue Ser-312 is modified to Phosphoserine. Residue Thr-314 is modified to Phosphothreonine. Lys-323 participates in a covalent cross-link: Glycyl lysine isopeptide (Lys-Gly) (interchain with G-Cter in SUMO2). The span at 340 to 357 (QEEIDRESGKTEASEPKK) shows a compositional bias: basic and acidic residues. Residues 340 to 378 (QEEIDRESGKTEASEPKKWTVGLSVKTEASEPKKWTGTQ) form a disordered region. Glycyl lysine isopeptide (Lys-Gly) (interchain with G-Cter in SUMO2) cross-links involve residues Lys-373, Lys-393, Lys-395, Lys-427, and Lys-462.

As to quaternary structure, interacts with ZNF106. Expressed in testis.

The protein resides in the nucleus. It is found in the nucleolus. The chain is Lysine-rich nucleolar protein 1 (Knop1) from Mus musculus (Mouse).